A 264-amino-acid chain; its full sequence is S-adenosylmethionine decarboxylase proenzyme (264 aa).

Catalysis depends on Ser-113, which acts as the Schiff-base intermediate with substrate; via pyruvic acid. Ser-113 carries the pyruvic acid (Ser); by autocatalysis modification. Catalysis depends on His-118, which acts as the Proton acceptor; for processing activity. The active-site Proton donor; for catalytic activity is Cys-141.

It belongs to the prokaryotic AdoMetDC family. Type 2 subfamily. As to quaternary structure, heterooctamer of four alpha and four beta chains arranged as a tetramer of alpha/beta heterodimers. Pyruvate is required as a cofactor. In terms of processing, is synthesized initially as an inactive proenzyme. Formation of the active enzyme involves a self-maturation process in which the active site pyruvoyl group is generated from an internal serine residue via an autocatalytic post-translational modification. Two non-identical subunits are generated from the proenzyme in this reaction, and the pyruvate is formed at the N-terminus of the alpha chain, which is derived from the carboxyl end of the proenzyme. The post-translation cleavage follows an unusual pathway, termed non-hydrolytic serinolysis, in which the side chain hydroxyl group of the serine supplies its oxygen atom to form the C-terminus of the beta chain, while the remainder of the serine residue undergoes an oxidative deamination to produce ammonia and the pyruvoyl group blocking the N-terminus of the alpha chain.

It catalyses the reaction S-adenosyl-L-methionine + H(+) = S-adenosyl 3-(methylsulfanyl)propylamine + CO2. The protein operates within amine and polyamine biosynthesis; S-adenosylmethioninamine biosynthesis; S-adenosylmethioninamine from S-adenosyl-L-methionine: step 1/1. Functionally, catalyzes the decarboxylation of S-adenosylmethionine to S-adenosylmethioninamine (dcAdoMet), the propylamine donor required for the synthesis of the polyamines spermine and spermidine from the diamine putrescine. This is S-adenosylmethionine decarboxylase proenzyme from Pseudomonas aeruginosa (strain UCBPP-PA14).